Here is a 167-residue protein sequence, read N- to C-terminus: CS6 fimbrial subunit B (167 aa).

The first 21 residues, 1–21 (MLKKIIPAIVLIAGTSGVVNA), serve as a signal peptide directing secretion.

It localises to the fimbrium. This Escherichia coli protein is CS6 fimbrial subunit B (cssB).